Consider the following 94-residue polypeptide: Co-chaperonin GroES (94 aa).

It belongs to the GroES chaperonin family. As to quaternary structure, heptamer of 7 subunits arranged in a ring. Interacts with the chaperonin GroEL.

The protein localises to the cytoplasm. Together with the chaperonin GroEL, plays an essential role in assisting protein folding. The GroEL-GroES system forms a nano-cage that allows encapsulation of the non-native substrate proteins and provides a physical environment optimized to promote and accelerate protein folding. GroES binds to the apical surface of the GroEL ring, thereby capping the opening of the GroEL channel. This chain is Co-chaperonin GroES, found in Enterococcus faecalis (strain ATCC 700802 / V583).